The primary structure comprises 316 residues: MEKALHRISSMNAALPDISLTDAAPGRRPLEWVGMQGIDLPVVVAEPGCRRDVHARADVQVDLPAPQVKGIHMSRLYGLLDGLADGEALSPAGLQRMLRAMVDSHRDCETRSARVRLRFDLLARRTALVTEGLAGWKAYPVRLDATLAGDAFALRAQVTVVYSSTCPCSAALSRHWIEQAFLTAFGHEARVEPTAVAAWLKRHAMAATPHSQRSEAVVSVALPADGTTLGLLDLIDRVEQALGTPVQTAVKRADEQAFAVLNGGNLMFVEDAARRVQAALEDRHASPRVRVRHLESLHPHDAVAWAAPLREGADAC.

Belongs to the GTP cyclohydrolase IV family.

The enzyme catalyses GTP + H2O = 7,8-dihydroneopterin 3'-triphosphate + formate + H(+). It functions in the pathway cofactor biosynthesis; 7,8-dihydroneopterin triphosphate biosynthesis; 7,8-dihydroneopterin triphosphate from GTP: step 1/1. Converts GTP to 7,8-dihydroneopterin triphosphate. The sequence is that of GTP cyclohydrolase FolE2 1 from Burkholderia orbicola (strain AU 1054).